A 293-amino-acid polypeptide reads, in one-letter code: Methylsterol monooxygenase 1 (293 aa).

The next 2 membrane-spanning stretches (helical) occupy residues 55-75 and 100-120; these read LIVHEALYFLFCLPGFLFQFI and VLLFNHFCIQLPLICGTYYFT. The region spanning 145-274 is the Fatty acid hydroxylase domain; the sequence is CAVIEDTWHY…FTWWDRIFGT (130 aa). The Histidine box-1 signature appears at 157–161; that stretch reads HRLLH. Residues 170–174 carry the Histidine box-2 motif; that stretch reads HKVHH. A helical membrane pass occupies residues 199 to 219; the sequence is FFIGIVLLCDHVILLWAWVTI. A Histidine box-3 motif is present at residues 249–255; that stretch reads HHDFHHM.

The protein belongs to the sterol desaturase family. Fe cation serves as cofactor. In terms of processing, ubiquitinated by MARCHF6, leading to proteasomal degradation.

It is found in the endoplasmic reticulum membrane. The enzyme catalyses 4,4-dimethyl-5alpha-cholest-7-en-3beta-ol + 6 Fe(II)-[cytochrome b5] + 3 O2 + 5 H(+) = 4alpha-carboxy-4beta-methyl-5alpha-cholest-7-ene-3beta-ol + 6 Fe(III)-[cytochrome b5] + 4 H2O. It catalyses the reaction 4,4-dimethyl-5alpha-cholesta-8,24-dien-3beta-ol + 6 Fe(II)-[cytochrome b5] + 3 O2 + 5 H(+) = 4beta-methylzymosterol-4alpha-carboxylate + 6 Fe(III)-[cytochrome b5] + 4 H2O. The catalysed reaction is 4alpha-methylzymosterol + 6 Fe(II)-[cytochrome b5] + 3 O2 + 5 H(+) = 4alpha-carboxyzymosterol + 6 Fe(III)-[cytochrome b5] + 4 H2O. It carries out the reaction 4alpha-methyl-5alpha-cholest-7-en-3beta-ol + 6 Fe(II)-[cytochrome b5] + 3 O2 + 5 H(+) = 4alpha-carboxy-5alpha-cholest-7-en-3beta-ol + 6 Fe(III)-[cytochrome b5] + 4 H2O. The enzyme catalyses 4,4-dimethyl-5alpha-cholest-8-en-3beta-ol + 6 Fe(II)-[cytochrome b5] + 3 O2 + 5 H(+) = 4alpha-carboxy-4beta-methyl-5alpha-cholest-8-en-3beta-ol + 6 Fe(III)-[cytochrome b5] + 4 H2O. It catalyses the reaction 4alpha-methyl-5alpha-cholest-8-en-3beta-ol + 6 Fe(II)-[cytochrome b5] + 3 O2 + 5 H(+) = 4alpha-carboxy-5alpha-cholest-8-ene-3beta-ol + 6 Fe(III)-[cytochrome b5] + 4 H2O. It functions in the pathway steroid biosynthesis; zymosterol biosynthesis; zymosterol from lanosterol: step 3/6. The protein operates within steroid biosynthesis; cholesterol biosynthesis. Functionally, catalyzes the three-step monooxygenation required for the demethylation of 4,4-dimethyl and 4alpha-methylsterols, which can be subsequently metabolized to cholesterol. The protein is Methylsterol monooxygenase 1 (MSMO1) of Pongo abelii (Sumatran orangutan).